The sequence spans 647 residues: tRNA 5-methylaminomethyl-2-thiouridine biosynthesis bifunctional protein MnmC (647 aa).

The tRNA (mnm(5)s(2)U34)-methyltransferase stretch occupies residues methionine 1 to serine 227. The segment at valine 256–lysine 647 is FAD-dependent cmnm(5)s(2)U34 oxidoreductase.

The protein in the N-terminal section; belongs to the methyltransferase superfamily. tRNA (mnm(5)s(2)U34)-methyltransferase family. This sequence in the C-terminal section; belongs to the DAO family. FAD is required as a cofactor.

It is found in the cytoplasm. It catalyses the reaction 5-aminomethyl-2-thiouridine(34) in tRNA + S-adenosyl-L-methionine = 5-methylaminomethyl-2-thiouridine(34) in tRNA + S-adenosyl-L-homocysteine + H(+). Catalyzes the last two steps in the biosynthesis of 5-methylaminomethyl-2-thiouridine (mnm(5)s(2)U) at the wobble position (U34) in tRNA. Catalyzes the FAD-dependent demodification of cmnm(5)s(2)U34 to nm(5)s(2)U34, followed by the transfer of a methyl group from S-adenosyl-L-methionine to nm(5)s(2)U34, to form mnm(5)s(2)U34. The protein is tRNA 5-methylaminomethyl-2-thiouridine biosynthesis bifunctional protein MnmC of Leptospira interrogans serogroup Icterohaemorrhagiae serovar Lai (strain 56601).